A 545-amino-acid polypeptide reads, in one-letter code: Chaperonin GroEL (545 aa).

Residues 29 to 32, K50, 86 to 90, G413, and D495 each bind ATP; these read TLGP and DGTTT.

It belongs to the chaperonin (HSP60) family. In terms of assembly, forms a cylinder of 14 subunits composed of two heptameric rings stacked back-to-back. Interacts with the co-chaperonin GroES.

Its subcellular location is the cytoplasm. The catalysed reaction is ATP + H2O + a folded polypeptide = ADP + phosphate + an unfolded polypeptide.. Together with its co-chaperonin GroES, plays an essential role in assisting protein folding. The GroEL-GroES system forms a nano-cage that allows encapsulation of the non-native substrate proteins and provides a physical environment optimized to promote and accelerate protein folding. The chain is Chaperonin GroEL from Borrelia garinii subsp. bavariensis (strain ATCC BAA-2496 / DSM 23469 / PBi) (Borreliella bavariensis).